Here is a 439-residue protein sequence, read N- to C-terminus: Serine hydroxymethyltransferase (439 aa).

126-128 lines the (6S)-5,6,7,8-tetrahydrofolate pocket; it reads AHV. Lys232 carries the post-translational modification N6-(pyridoxal phosphate)lysine.

This sequence belongs to the SHMT family. As to quaternary structure, homodimer. Pyridoxal 5'-phosphate serves as cofactor.

Its subcellular location is the cytoplasm. It functions in the pathway amino-acid biosynthesis; glycine biosynthesis; glycine from L-serine: step 1/1. Its function is as follows. Catalyzes the reversible interconversion of serine and glycine with a modified folate serving as the one-carbon carrier. Also exhibits a pteridine-independent aldolase activity toward beta-hydroxyamino acids, producing glycine and aldehydes, via a retro-aldol mechanism. This chain is Serine hydroxymethyltransferase, found in Staphylothermus marinus (strain ATCC 43588 / DSM 3639 / JCM 9404 / F1).